Here is an 811-residue protein sequence, read N- to C-terminus: Phenylalanine--tRNA ligase beta subunit (811 aa).

The tRNA-binding domain maps to 40-156; sequence AEKNENIVVG…EDIEVGSKVD (117 aa). The region spanning 411–486 is the B5 domain; it reads KSTKEVKVPL…RIHGYDHLPY (76 aa). Aspartate 464, aspartate 470, glutamate 473, and glutamate 474 together coordinate Mg(2+). One can recognise an FDX-ACB domain in the interval 717-810; sequence PRYPSVSRDI…VNKKFGSYVR (94 aa).

The protein belongs to the phenylalanyl-tRNA synthetase beta subunit family. Type 1 subfamily. As to quaternary structure, tetramer of two alpha and two beta subunits. Mg(2+) is required as a cofactor.

It is found in the cytoplasm. It carries out the reaction tRNA(Phe) + L-phenylalanine + ATP = L-phenylalanyl-tRNA(Phe) + AMP + diphosphate + H(+). This Oceanobacillus iheyensis (strain DSM 14371 / CIP 107618 / JCM 11309 / KCTC 3954 / HTE831) protein is Phenylalanine--tRNA ligase beta subunit.